Here is an 89-residue protein sequence, read N- to C-terminus: ATP synthase subunit e, mitochondrial (89 aa).

The residue at position 1 (Ser-1) is an N-acetylserine. A helical transmembrane segment spans residues 8-25 (YSSLAAGIVYGAYHTYTL).

As to quaternary structure, F-type ATP synthases have 2 components, the catalytic core F(1) and the membrane-embedded component F(0), linked together by a central stalk and a peripheral stalk. The central stalk, also called rotor shaft, is often seen as part of F(1). The peripheral stalk is seen as part of F(0). F(0) contains the membrane channel next to the rotor. F-type ATP synthases form dimers but each monomer functions independently in ATP generation. The dimer consists of 18 different polypeptides: ATP1 (subunit alpha, part of F(1), 3 molecules per monomer), ATP2 (subunit beta, part of F(1), 3 molecules per monomer), ATP3 (subunit gamma, part of the central stalk), ATP4 (subunit b, part of the peripheral stalk), ATP5/OSCP (subunit 5/OSCP, part of the peripheral stalk), ATP6 (subunit a, part of the peripheral stalk), ATP7 (subunit d, part of the peripheral stalk), ATP8 (subunit 8, part of the peripheral stalk), OLI1 (subunit c, part of the rotor, 10 molecules per monomer), ATP14 (subunit h, part of the peripheral stalk), ATP15 (subunit epsilon, part of the central stalk), ATP16 (subunit delta, part of the central stalk), ATP17 (subunit f, part of the peripheral stalk), ATP18 (subunit i/j, part of the peripheral stalk). Dimer-specific subunits are ATP19 (subunit k, at interface between monomers), ATP20 (subunit g, at interface between monomers), TIM11 (subunit e, at interface between monomers). Also contains subunit L.

The protein localises to the mitochondrion inner membrane. Mitochondrial membrane ATP synthase (F(1)F(0) ATP synthase or Complex V) produces ATP from ADP in the presence of a proton gradient across the membrane which is generated by electron transport complexes of the respiratory chain. F-type ATP synthases consist of two structural domains, F(1) - containing the extramembraneous catalytic core, and F(0) - containing the membrane proton channel, linked together by a central stalk and a peripheral stalk. During catalysis, ATP synthesis in the catalytic domain of F(1) is coupled via a rotary mechanism of the central stalk subunits to proton translocation. Part of the complex F(0) domain. Minor subunit located with subunit a/ATP6 in the membrane. Together with subunit g/ATP20, probably contributes to membrane curvature at the site of the ATP synthase dimer, ultimately contributing to formation of cristae. In Pichia angusta (Yeast), this protein is ATP synthase subunit e, mitochondrial.